The primary structure comprises 428 residues: MSSVVVVGTQWGDEGKGKITDFLSENAEVIARYQGGNNAGHTIVFNGEKYKLHLIPSGIFYKDKICVIGNGMVVDPKALVAELSYLHERGISTDNLRISNRAHVILPYHLKLDELEEERKGANKIGTTKKGIGPAYMDKAARIGIRIVDLLDRDVFAEKLERNLREKNTLLEKVYGVEGFRLEDIFEEYYEYGQHIAKYVCDTSVVLNNALDEGRRVLFEGAQGVMLDIDQGTYPFVTSSNPVAGGVTIGAGVGPTKIKHVVGVAKAYTTRVGDGPFPTELHDEIGDRIREVGREYGTTTGRPRRVGWFDSVVVRHARRVSGITDLSLNSIDVLTGIETLKICVAYRYRGQVLEEFPASLKVLAECEPIYEELPGWTEDITGVKSLDELPANARHYVERISQLTGIPLSIFSVGPDRSQTNVVRSVYA.

Residues 12–18 (GDEGKGK) and 40–42 (GHT) each bind GTP. Aspartate 13 acts as the Proton acceptor in catalysis. The Mg(2+) site is built by aspartate 13 and glycine 40. IMP contacts are provided by residues 13-16 (DEGK), 38-41 (NAGH), threonine 128, arginine 142, glutamine 223, threonine 238, and arginine 302. The active-site Proton donor is histidine 41. 298–304 (TTTGRPR) serves as a coordination point for substrate. Residues arginine 304, 330–332 (SID), and 412–414 (SVG) each bind GTP.

Belongs to the adenylosuccinate synthetase family. Homodimer. Mg(2+) is required as a cofactor.

It localises to the cytoplasm. It carries out the reaction IMP + L-aspartate + GTP = N(6)-(1,2-dicarboxyethyl)-AMP + GDP + phosphate + 2 H(+). It functions in the pathway purine metabolism; AMP biosynthesis via de novo pathway; AMP from IMP: step 1/2. In terms of biological role, plays an important role in the de novo pathway of purine nucleotide biosynthesis. Catalyzes the first committed step in the biosynthesis of AMP from IMP. The protein is Adenylosuccinate synthetase of Geobacillus kaustophilus (strain HTA426).